The following is a 244-amino-acid chain: DNA repair protein RecO (244 aa).

It belongs to the RecO family.

In terms of biological role, involved in DNA repair and RecF pathway recombination. In Geobacter metallireducens (strain ATCC 53774 / DSM 7210 / GS-15), this protein is DNA repair protein RecO.